Here is a 122-residue protein sequence, read N- to C-terminus: Large ribosomal subunit protein uL14 (122 aa).

It belongs to the universal ribosomal protein uL14 family. In terms of assembly, part of the 50S ribosomal subunit. Forms a cluster with proteins L3 and L19. In the 70S ribosome, L14 and L19 interact and together make contacts with the 16S rRNA in bridges B5 and B8.

Binds to 23S rRNA. Forms part of two intersubunit bridges in the 70S ribosome. In Teredinibacter turnerae (strain ATCC 39867 / T7901), this protein is Large ribosomal subunit protein uL14.